A 344-amino-acid polypeptide reads, in one-letter code: Interferon gamma receptor 1-like (344 aa).

The N-terminal stretch at M1 to G22 is a signal peptide. The Extracellular portion of the chain corresponds to F23–G229. Residues V24–E102 form the Fibronectin type-III domain. N-linked (GlcNAc...) asparagine glycosylation is found at N29, N44, N132, and N189. A helical transmembrane segment spans residues I230–W250. Over L251–L344 the chain is Cytoplasmic. The segment at T300 to L344 is disordered.

The protein belongs to the type II cytokine receptor family. In terms of tissue distribution, highly expressed in brain. Also detected in spleen, heart, intestine, gill and kidney. In immune cell populations, detected at low levels in monocytes, peripheral blood leukocytes, splenocytes, neutrophils and mature macrophages.

It is found in the cell membrane. In terms of biological role, receptor which shows binding specificity for the cytokine ifng1 (interferon gamma 1). The sequence is that of Interferon gamma receptor 1-like from Carassius auratus (Goldfish).